A 216-amino-acid polypeptide reads, in one-letter code: Octanoyltransferase (216 aa).

One can recognise a BPL/LPL catalytic domain in the interval 29 to 209 (DRAGECVWLL…SFDAVFGPCP (181 aa)). Residues 68–75 (RGGQYTYH), 140–142 (AIG), and 153–155 (GFA) each bind substrate. Residue C171 is the Acyl-thioester intermediate of the active site.

The protein belongs to the LipB family.

The protein localises to the cytoplasm. The enzyme catalyses octanoyl-[ACP] + L-lysyl-[protein] = N(6)-octanoyl-L-lysyl-[protein] + holo-[ACP] + H(+). The protein operates within protein modification; protein lipoylation via endogenous pathway; protein N(6)-(lipoyl)lysine from octanoyl-[acyl-carrier-protein]: step 1/2. In terms of biological role, catalyzes the transfer of endogenously produced octanoic acid from octanoyl-acyl-carrier-protein onto the lipoyl domains of lipoate-dependent enzymes. Lipoyl-ACP can also act as a substrate although octanoyl-ACP is likely to be the physiological substrate. The protein is Octanoyltransferase of Rhodospirillum rubrum (strain ATCC 11170 / ATH 1.1.1 / DSM 467 / LMG 4362 / NCIMB 8255 / S1).